Here is a 171-residue protein sequence, read N- to C-terminus: N5-carboxyaminoimidazole ribonucleotide mutase (171 aa).

Substrate is bound by residues serine 10, aspartate 13, and arginine 40.

Belongs to the AIR carboxylase family. Class I subfamily.

The enzyme catalyses 5-carboxyamino-1-(5-phospho-D-ribosyl)imidazole + H(+) = 5-amino-1-(5-phospho-D-ribosyl)imidazole-4-carboxylate. The protein operates within purine metabolism; IMP biosynthesis via de novo pathway; 5-amino-1-(5-phospho-D-ribosyl)imidazole-4-carboxylate from 5-amino-1-(5-phospho-D-ribosyl)imidazole (N5-CAIR route): step 2/2. In terms of biological role, catalyzes the conversion of N5-carboxyaminoimidazole ribonucleotide (N5-CAIR) to 4-carboxy-5-aminoimidazole ribonucleotide (CAIR). The chain is N5-carboxyaminoimidazole ribonucleotide mutase from Thermotoga maritima (strain ATCC 43589 / DSM 3109 / JCM 10099 / NBRC 100826 / MSB8).